A 344-amino-acid polypeptide reads, in one-letter code: Galactinol synthase 1 (344 aa).

The active site involves Lys111. The Mn(2+) site is built by Asp127, Asp129, and His265.

The protein belongs to the glycosyltransferase 8 family. Galactosyltransferase subfamily. A divalent metal cation serves as cofactor. As to expression, accumulates in mature seeds. Expressed in seedlings (axes and cotyledons), meristems, vascular tissues and emerging lateral roots. Present in abscission zones.

It localises to the cytoplasm. It catalyses the reaction myo-inositol + UDP-alpha-D-galactose = alpha-D-galactosyl-(1-&gt;3)-1D-myo-inositol + UDP + H(+). Functionally, galactinol synthase involved in the biosynthesis of raffinose family oligosaccharides (RFOs) that function as osmoprotectants. Promotes plant stress tolerance such as heat, chilling, salinity and methylviologen (MV), a superoxide radical generating drug, by mediating raffinose accumulation, an osmoprotective substance. In Arabidopsis thaliana (Mouse-ear cress), this protein is Galactinol synthase 1 (GOLS1).